A 267-amino-acid polypeptide reads, in one-letter code: Indole-3-glycerol phosphate synthase (267 aa).

This sequence belongs to the TrpC family.

It carries out the reaction 1-(2-carboxyphenylamino)-1-deoxy-D-ribulose 5-phosphate + H(+) = (1S,2R)-1-C-(indol-3-yl)glycerol 3-phosphate + CO2 + H2O. Its pathway is amino-acid biosynthesis; L-tryptophan biosynthesis; L-tryptophan from chorismate: step 4/5. This Delftia acidovorans (strain DSM 14801 / SPH-1) protein is Indole-3-glycerol phosphate synthase.